Reading from the N-terminus, the 414-residue chain is Cyclin-B1-3 (414 aa).

The protein belongs to the cyclin family. Cyclin AB subfamily. As to expression, expressed in roots, stems and flowers.

This is Cyclin-B1-3 (CYCB1-3) from Arabidopsis thaliana (Mouse-ear cress).